The following is a 756-amino-acid chain: Lysyl oxidase homolog 4 (756 aa).

The first 24 residues, 1 to 24 (MAWSPPATLFLFLLLLGQPPPSRP), serve as a signal peptide directing secretion. 4 consecutive SRCR domains span residues 32 to 133 (LRLV…VICH), 159 to 287 (VRLK…VSCV), 311 to 411 (VRLR…VRCN), and 421 to 529 (VRLA…VSCM). Cystine bridges form between cysteine 58-cysteine 122, cysteine 71-cysteine 132, cysteine 102-cysteine 112, cysteine 191-cysteine 276, cysteine 204-cysteine 286, cysteine 251-cysteine 261, cysteine 336-cysteine 400, cysteine 349-cysteine 410, cysteine 380-cysteine 390, cysteine 450-cysteine 515, cysteine 463-cysteine 528, cysteine 497-cysteine 507, cysteine 558-cysteine 564, cysteine 610-cysteine 658, cysteine 642-cysteine 648, cysteine 670-cysteine 680, and cysteine 717-cysteine 731. The N-linked (GlcNAc...) asparagine glycan is linked to asparagine 198. Residues 533 to 736 (PDLVMNAQLV…WLHNCHTGNS (204 aa)) are lysyl-oxidase like. 3 residues coordinate Cu cation: histidine 611, histidine 613, and histidine 615. Asparagine 629 is a glycosylation site (N-linked (GlcNAc...) asparagine). Positions 638–674 (KASFCLEDTNCPTGLQRRYACANFGEQGVTVGCWDTY) form a cross-link, lysine tyrosylquinone (Lys-Tyr). The residue at position 674 (tyrosine 674) is a 2',4',5'-topaquinone.

Belongs to the lysyl oxidase family. Requires Cu cation as cofactor. It depends on lysine tyrosylquinone residue as a cofactor. The lysine tyrosylquinone cross-link (LTQ) is generated by condensation of the epsilon-amino group of a lysine with a topaquinone produced by oxidation of tyrosine. In terms of processing, may be proteolytically cleaved by BMP1. As to expression, expressed in many tissues, the highest levels among the tissues studied being in the skeletal muscle, testis and pancreas. Expressed in cartilage.

It is found in the secreted. Its subcellular location is the extracellular space. It carries out the reaction L-lysyl-[protein] + O2 + H2O = (S)-2-amino-6-oxohexanoyl-[protein] + H2O2 + NH4(+). Inhibited by beta-aminopropionitrile (BAPN). In terms of biological role, catalyzes the oxidative deamination of lysine and hydroxylysine residues in collagen and elastin, resulting in the formation of covalent cross-linkages, and the stabilization of collagen and elastin fibers. In Homo sapiens (Human), this protein is Lysyl oxidase homolog 4 (LOXL4).